The chain runs to 335 residues: Nucleoid-associated protein Ent638_2782 (335 aa).

It belongs to the YejK family.

Its subcellular location is the cytoplasm. The protein localises to the nucleoid. The protein is Nucleoid-associated protein Ent638_2782 of Enterobacter sp. (strain 638).